We begin with the raw amino-acid sequence, 346 residues long: Methylthioribose-1-phosphate isomerase (346 aa).

Residues 46–48, Arg-89, and Gln-196 each bind substrate; that span reads RGA. The active-site Proton donor is the Asp-237. 247–248 lines the substrate pocket; it reads NK.

The protein belongs to the eIF-2B alpha/beta/delta subunits family. MtnA subfamily.

It carries out the reaction 5-(methylsulfanyl)-alpha-D-ribose 1-phosphate = 5-(methylsulfanyl)-D-ribulose 1-phosphate. The protein operates within amino-acid biosynthesis; L-methionine biosynthesis via salvage pathway; L-methionine from S-methyl-5-thio-alpha-D-ribose 1-phosphate: step 1/6. Functionally, catalyzes the interconversion of methylthioribose-1-phosphate (MTR-1-P) into methylthioribulose-1-phosphate (MTRu-1-P). The polypeptide is Methylthioribose-1-phosphate isomerase (Trichlorobacter lovleyi (strain ATCC BAA-1151 / DSM 17278 / SZ) (Geobacter lovleyi)).